The primary structure comprises 430 residues: MLDPNLLRNEPDAVAEKLARRGFKLDVDKLRALEERRKVLQVNTENLQAERNSRSKSIGQAKARGEDIEPLRLEVNKLGEELDAAKAELETLLAEIRDIALTIPNLPADEVPVGKDENDNVEVSRWGTPREFDFEIRDHVTLGEMHSGLDFAAAVKLTGSRFVVMKGQIARMHRALSQFMLDLHTEQHGYSENYVPYLVNHDTLYGTGQLPKFAGDLFHTRPLEEEADSSNYALIPTAEVPLTNLVRDEIIDEDQLPIKMTAHTPCFRSEAGSYGRDTRGLIRMHQFDKVEMVQIVRPEDSMAALEEMTGHAEKVLQLLGLPYRKIILCTGDMGFGACKTYDLEVWVPAQNTYREISSCSNVWDFQARRMQARCRSKSDKKTRLVHTLNGSGLAVGRTLVAVMENYQQADGRIEVPEVLRPYMNGLEYIG.

An L-serine-binding site is contributed by 237–239 (TAE). 268–270 (RSE) lines the ATP pocket. E291 contacts L-serine. ATP is bound at residue 355–358 (EISS). An L-serine-binding site is contributed by S391.

The protein belongs to the class-II aminoacyl-tRNA synthetase family. Type-1 seryl-tRNA synthetase subfamily. Homodimer. The tRNA molecule binds across the dimer.

It localises to the cytoplasm. The catalysed reaction is tRNA(Ser) + L-serine + ATP = L-seryl-tRNA(Ser) + AMP + diphosphate + H(+). The enzyme catalyses tRNA(Sec) + L-serine + ATP = L-seryl-tRNA(Sec) + AMP + diphosphate + H(+). The protein operates within aminoacyl-tRNA biosynthesis; selenocysteinyl-tRNA(Sec) biosynthesis; L-seryl-tRNA(Sec) from L-serine and tRNA(Sec): step 1/1. In terms of biological role, catalyzes the attachment of serine to tRNA(Ser). Is also able to aminoacylate tRNA(Sec) with serine, to form the misacylated tRNA L-seryl-tRNA(Sec), which will be further converted into selenocysteinyl-tRNA(Sec). The chain is Serine--tRNA ligase from Salmonella heidelberg (strain SL476).